The following is a 204-amino-acid chain: Holliday junction branch migration complex subunit RuvA (204 aa).

The segment at 1–64 (MIGRLRGILL…EDAQLLYGFN (64 aa)) is domain I. Positions 65–143 (TVKERALFRE…GWGAGDLFTP (79 aa)) are domain II. The segment at 144 to 155 (FTDAAPTDSAAA) is flexible linker. The tract at residues 156–204 (SSNSAEEEAVSALLALGYKPTQASKVVSQIAKPDMSSEQLIREALKSMV) is domain III.

This sequence belongs to the RuvA family. As to quaternary structure, homotetramer. Forms an RuvA(8)-RuvB(12)-Holliday junction (HJ) complex. HJ DNA is sandwiched between 2 RuvA tetramers; dsDNA enters through RuvA and exits via RuvB. An RuvB hexamer assembles on each DNA strand where it exits the tetramer. Each RuvB hexamer is contacted by two RuvA subunits (via domain III) on 2 adjacent RuvB subunits; this complex drives branch migration. In the full resolvosome a probable DNA-RuvA(4)-RuvB(12)-RuvC(2) complex forms which resolves the HJ.

The protein localises to the cytoplasm. Functionally, the RuvA-RuvB-RuvC complex processes Holliday junction (HJ) DNA during genetic recombination and DNA repair, while the RuvA-RuvB complex plays an important role in the rescue of blocked DNA replication forks via replication fork reversal (RFR). RuvA specifically binds to HJ cruciform DNA, conferring on it an open structure. The RuvB hexamer acts as an ATP-dependent pump, pulling dsDNA into and through the RuvAB complex. HJ branch migration allows RuvC to scan DNA until it finds its consensus sequence, where it cleaves and resolves the cruciform DNA. In Vibrio parahaemolyticus serotype O3:K6 (strain RIMD 2210633), this protein is Holliday junction branch migration complex subunit RuvA.